Reading from the N-terminus, the 445-residue chain is Mitochondrial enolase superfamily member 1 (445 aa).

Substrate is bound by residues 24 to 26 (GSD), tyrosine 34, and lysine 220. Catalysis depends on lysine 222, which acts as the Proton donor/acceptor. Residue aspartate 250 coordinates Mg(2+). Residues asparagine 252, glutamate 276, glutamate 305, 355–357 (HAG), and glutamate 386 contribute to the substrate site. 2 residues coordinate Mg(2+): glutamate 276 and glutamate 305. Histidine 355 is a catalytic residue.

The protein belongs to the mandelate racemase/muconate lactonizing enzyme family. ENOSF1 subfamily. Mg(2+) is required as a cofactor.

The protein localises to the mitochondrion. It catalyses the reaction L-fuconate = 2-dehydro-3-deoxy-L-fuconate + H2O. In terms of biological role, plays a role in the catabolism of L-fucose, a sugar that is part of the carbohydrates that are attached to cellular glycoproteins. Catalyzes the dehydration of L-fuconate to 2-keto-3-deoxy-L-fuconate by the abstraction of the 2-proton to generate an enediolate intermediate that is stabilized by the magnesium ion. May down-regulate thymidylate synthase activity, possibly already at the RNA level, by promoting the degradation of TYMS mRNA via an antisense RNA-based mechanism. This is Mitochondrial enolase superfamily member 1 (enosf1) from Xenopus laevis (African clawed frog).